The primary structure comprises 2177 residues: Protein sidekick-2 (2177 aa).

The first 26 residues, 1-26, serve as a signal peptide directing secretion; the sequence is MKGLGVPAAALLWGGLSALLPPSLPA. Residues 27–1937 lie on the Extracellular side of the membrane; the sequence is DDVSPYFKTE…ANPFYEEWWF (1911 aa). 6 consecutive Ig-like C2-type domains span residues 31–113, 118–205, 220–299, 313–401, 407–496, and 501–590; these read PYFK…TEVQ, GSFE…QPIT, PTII…SSVP, PQFV…TYLA, PNIT…ADLV, and TRIT…AHLR. An intrachain disulfide couples Cys-53 to Cys-96. N-linked (GlcNAc...) asparagine glycans are attached at residues Asn-198 and Asn-228. 2 disulfide bridges follow: Cys-242-Cys-289 and Cys-335-Cys-385. N-linked (GlcNAc...) asparagine glycosylation is present at Asn-408. Cystine bridges form between Cys-428–Cys-480 and Cys-522–Cys-574. N-linked (GlcNAc...) asparagine glycans are attached at residues Asn-582, Asn-614, Asn-709, Asn-748, Asn-809, Asn-941, and Asn-953. 13 Fibronectin type-III domains span residues 597 to 693, 698 to 794, 799 to 898, 902 to 996, 1000 to 1099, 1104 to 1202, 1207 to 1304, 1305 to 1402, 1407 to 1504, 1509 to 1626, 1631 to 1727, 1731 to 1826, and 1829 to 1928; these read APES…LPEE, PPQN…TLQG, PPGN…THED, PVGH…VPPE, APTN…TLQA, APAN…TRES, GPSN…TLDD, VPGP…TEKR, PPSK…TLQA, APTI…VGEA, APQN…TQQA, APGS…TGPG, and APGP…AQKA. 11 N-linked (GlcNAc...) asparagine glycosylation sites follow: Asn-1107, Asn-1210, Asn-1261, Asn-1346, Asn-1462, Asn-1580, Asn-1593, Asn-1675, Asn-1694, Asn-1746, and Asn-1820. The helical transmembrane segment at 1938 to 1958 threads the bilayer; sequence LVVIALVGLIFILLLVFVLII. The Cytoplasmic portion of the chain corresponds to 1959-2177; sequence RGQSKKYAKK…APIGGFSSFV (219 aa). Disordered stretches follow at residues 2044-2071 and 2103-2177; these read AESS…VDPA and QAYS…SSFV. 2 stretches are compositionally biased toward polar residues: residues 2045 to 2063 and 2119 to 2130; these read ESSS…QGSD and PLSNSTSTQQGS. Positions 2142-2151 are enriched in pro residues; sequence PQTPGNPPSQ. Positions 2171–2177 match the PDZ-binding motif; the sequence is GGFSSFV.

This sequence belongs to the sidekick family. Homodimer; mediates homophilic interactions to promote cell adhesion. As to expression, expressed by non-overlapping subsets of retinal neurons. SDK1, SDK2, DSCAM and DSCAML1 are expressed in non-overlapping subsets of interneurons and retinal ganglion cells (RGCs) that form synapses in distinct inner plexiform layer (IPL) sublaminae.

The protein resides in the cell membrane. The protein localises to the synapse. Functionally, adhesion molecule that promotes lamina-specific synaptic connections in the retina. Expressed in specific subsets of interneurons and retinal ganglion cells (RGCs) and promotes synaptic connectivity via homophilic interactions. This chain is Protein sidekick-2, found in Gallus gallus (Chicken).